Consider the following 372-residue polypeptide: Prostaglandin E synthase 2 (372 aa).

Residues 1 to 54 (MAHAVRALWPHGRALAWRLGDRPALGLHAQSRAGFTGAAGGSGPAATARKGGPR) lie on the Lumenal side of the membrane. A helical membrane pass occupies residues 55–71 (LLGAAALALGGALGLYH). The Cytoplasmic segment spans residues 72–372 (TARWHLRAQD…VEKAIAEAPQ (301 aa)). One can recognise a Glutaredoxin domain in the interval 87–190 (SATQLSLSSR…DIITYYPPMK (104 aa)). Residue Ser92 is modified to Phosphoserine. Glutathione is bound by residues Val145 and 161-162 (DS). The 114-residue stretch at 259 to 372 (DYIVKEGNFG…VEKAIAEAPQ (114 aa)) folds into the GST C-terminal domain.

This sequence belongs to the GST superfamily. In terms of assembly, may interact with CEBPB. Interacts with EXOSC10. Homodimer. Synthesized as a Golgi membrane-associated protein, and the proteolytic removal of the N-terminal hydrophobic domain leads to the formation of a mature cytosolic enzyme. As to expression, detected in heart (at protein level). Widely expressed. Expressed in heart &gt; kidney &gt; muscle &gt; testis &gt; endometrium = ovary &gt; myometrium = spleen = lung. In endometrium, it is mainly expressed in luminal epithelial cells followed by glandular epithelial cells, but expression is also present in stromal cells at a lower level.

The protein resides in the microsome membrane. Its subcellular location is the cytoplasm. It catalyses the reaction prostaglandin H2 = prostaglandin E2. It carries out the reaction prostaglandin H2 = (12S)-hydroxy-(5Z,8E,10E)-heptadecatrienoate + malonaldehyde. Its pathway is lipid metabolism; prostaglandin biosynthesis. With respect to regulation, isomerase activity is increased by sulfhydril compounds. Dithiothreitol (DTT) is most effective, followed by glutathione (GSH) and 2-mercaptoethanol. In terms of biological role, isomerase that catalyzes the conversion of PGH2 into the more stable prostaglandin E2 (PGE2) (in vitro). The biological function and the GSH-dependent property of PTGES2 is still under debate. In vivo, PTGES2 could form a complex with GSH and heme and would not participate in PGE2 synthesis but would catalyze the degradation of prostaglandin E2 H2 (PGH2) to 12(S)-hydroxy-5(Z),8(E),10(E)-heptadecatrienoic acid (HHT) and malondialdehyde (MDA). In Bos taurus (Bovine), this protein is Prostaglandin E synthase 2 (PTGES2).